The sequence spans 450 residues: Phosphoglucosamine mutase (450 aa).

Residue S102 is the Phosphoserine intermediate of the active site. Mg(2+) contacts are provided by S102, D243, D245, and D247. At S102 the chain carries Phosphoserine.

The protein belongs to the phosphohexose mutase family. Requires Mg(2+) as cofactor. In terms of processing, activated by phosphorylation.

The enzyme catalyses alpha-D-glucosamine 1-phosphate = D-glucosamine 6-phosphate. Catalyzes the conversion of glucosamine-6-phosphate to glucosamine-1-phosphate. The protein is Phosphoglucosamine mutase of Mesorhizobium japonicum (strain LMG 29417 / CECT 9101 / MAFF 303099) (Mesorhizobium loti (strain MAFF 303099)).